Here is a 284-residue protein sequence, read N- to C-terminus: Bifunctional protein FolD (284 aa).

NADP(+)-binding positions include 166–168 and I232; that span reads GAS.

This sequence belongs to the tetrahydrofolate dehydrogenase/cyclohydrolase family. In terms of assembly, homodimer.

It catalyses the reaction (6R)-5,10-methylene-5,6,7,8-tetrahydrofolate + NADP(+) = (6R)-5,10-methenyltetrahydrofolate + NADPH. The enzyme catalyses (6R)-5,10-methenyltetrahydrofolate + H2O = (6R)-10-formyltetrahydrofolate + H(+). It functions in the pathway one-carbon metabolism; tetrahydrofolate interconversion. In terms of biological role, catalyzes the oxidation of 5,10-methylenetetrahydrofolate to 5,10-methenyltetrahydrofolate and then the hydrolysis of 5,10-methenyltetrahydrofolate to 10-formyltetrahydrofolate. The protein is Bifunctional protein FolD of Shewanella sediminis (strain HAW-EB3).